The following is a 290-amino-acid chain: Urease accessory protein UreD (290 aa).

Belongs to the UreD family. As to quaternary structure, ureD, UreF and UreG form a complex that acts as a GTP-hydrolysis-dependent molecular chaperone, activating the urease apoprotein by helping to assemble the nickel containing metallocenter of UreC. The UreE protein probably delivers the nickel.

The protein localises to the cytoplasm. Its function is as follows. Required for maturation of urease via the functional incorporation of the urease nickel metallocenter. The polypeptide is Urease accessory protein UreD (Paenarthrobacter aurescens (strain TC1)).